The sequence spans 633 residues: CDK5 and ABL1 enzyme substrate 1 (633 aa).

Low complexity predominate over residues 1 to 29; that stretch reads MAAAAAAATTAACSSGSAGTDAAGASGLQ. The segment at 1–99 is disordered; sequence MAAAAAAATT…EGGAAKPGAG (99 aa). The segment at 1–109 is interaction with TDRD7; that stretch reads MAAAAAAATT…GACGARTRFS (109 aa). The segment covering 51–61 has biased composition (basic and acidic residues); it reads PPRKPRMDPRR. Residues Ser168 and Ser287 each carry the phosphoserine modification. An interaction with CDK3 region spans residues 179 to 492; it reads QWQPPRPAPL…TTVIDYVKPS (314 aa). Ser313 is modified (phosphoserine; by CDK2 and CDK3). Phosphothreonine is present on Thr415.

It belongs to the cyclin family. Found in a complex with p53/TP53. Found in a number of complexes with CDK2, CDK3, CDK5, ABL1, TDRD7, CDK17, CCNA1, CCNE1 and TP73. Interacts with CDK2, CDK3, CDK5, ABL1 and TDRD7. In terms of processing, phosphorylated on Ser-313 by CCNE1/CDK3. Phosphorylated on serine/threonine residues by CDK5 and on tyrosine residues by ABL1. Also phosphorylated in vitro by CCNA1/CDK2, CCNE1/CDK2, CCNA1/CDK3 and CCNE1/CDK3. As to expression, expressed in breast, pancreas, colon, head and neck (at protein level). Strongly decreased in more than half of cases of atypical endometrial hyperplasia and in more than 90% of endometrial cancers.

It is found in the nucleus. The protein localises to the cytoplasm. Cyclin-dependent kinase binding protein. Enhances cyclin-dependent kinase tyrosine phosphorylation by nonreceptor tyrosine kinases, such as that of CDK5 by activated ABL1, which leads to increased CDK5 activity and is critical for neuronal development, and that of CDK2 by WEE1, which leads to decreased CDK2 activity and growth inhibition. Positively affects neuronal outgrowth. Plays a role as a regulator for p53/p73-induced cell death. This chain is CDK5 and ABL1 enzyme substrate 1 (CABLES1), found in Homo sapiens (Human).